Consider the following 240-residue polypeptide: Eukaryotic translation initiation factor 4E-3 (240 aa).

Residues 1–51 (MVVTDSPVSGIMADQNIDPNTTTSPSPKEKHVSAIKAISGDEKAPSKEKKN) are disordered. Residues 17–26 (IDPNTTTSPS) are compositionally biased toward polar residues. The segment covering 39–51 (SGDEKAPSKEKKN) has biased composition (basic and acidic residues). EIF4G-binding regions lie at residues 65 to 68 (HCFQ) and 75 to 111 (FDNP…NNIH). MRNA contacts are provided by residues 83–88 (NQVIWG), Lys115, and 133–134 (WE). A disulfide bond links Cys138 and Cys176. The EIF4G-binding stretch occupies residues 159-168 (NTLLALVGEQ). Residues 183–188 (RARGDR) and 228–232 (KTLDR) each bind mRNA.

The protein belongs to the eukaryotic initiation factor 4E family. In terms of assembly, EIF4F is a multi-subunit complex, the composition of which varies with external and internal environmental conditions. It is composed of at least EIF4A, EIF4E and EIF4G. EIF4E is also known to interact with other partners. In higher plants two isoforms of EIF4F have been identified, named isoform EIF4F and isoform EIF(iso)4F. Isoform EIF4F has subunits p220 and p26, whereas isoform EIF(iso)4F has subunits p82 and p28. In terms of processing, according to the redox status, the Cys-138-Cys-176 disulfide bridge may have a role in regulating protein function by affecting its ability to bind capped mRNA.

The protein localises to the nucleus. It is found in the cytoplasm. Functionally, component of the protein complex eIF4F, which is involved in the recognition of the mRNA cap, ATP-dependent unwinding of 5'-terminal secondary structure and recruitment of mRNA to the ribosome. Recognizes and binds the 7-methylguanosine-containing mRNA cap during an early step in the initiation of protein synthesis and facilitates ribosome binding by inducing the unwinding of the mRNAs secondary structures. The sequence is that of Eukaryotic translation initiation factor 4E-3 from Arabidopsis thaliana (Mouse-ear cress).